The chain runs to 37 residues: Large ribosomal subunit protein bL36c (37 aa).

Belongs to the bacterial ribosomal protein bL36 family.

The protein resides in the plastid. It is found in the chloroplast. The polypeptide is Large ribosomal subunit protein bL36c (Adiantum capillus-veneris (Maidenhair fern)).